A 562-amino-acid polypeptide reads, in one-letter code: Tissue-type plasminogen activator (562 aa).

The first 19 residues, 1–19 (MYALKRELWCVLLLCGAIC), serve as a signal peptide directing secretion. The propeptide occupies 20–32 (TSPSQETHRRLRR). Positions 33–35 (GVR) are cleaved as a propeptide — removed by plasmin. Positions 39 to 81 (VTCRDEKTQMIYQQHQSWLRPLLRGNRVEHCWCNDGQTQCHSV) constitute a Fibronectin type-I domain. 17 cysteine pairs are disulfide-bonded: Cys-41–Cys-71, Cys-69–Cys-78, Cys-86–Cys-97, Cys-91–Cys-108, Cys-110–Cys-119, Cys-127–Cys-208, Cys-148–Cys-190, Cys-179–Cys-203, Cys-215–Cys-296, Cys-236–Cys-278, Cys-267–Cys-291, Cys-299–Cys-430, Cys-342–Cys-358, Cys-350–Cys-419, Cys-444–Cys-519, Cys-476–Cys-492, and Cys-509–Cys-537. The interval 42 to 52 (RDEKTQMIYQQ) is important for binding to annexin A2. The EGF-like domain occupies 82 to 120 (PVKSCSEPRCFNGGTCLQAIYFSDFVCQCPVGFIGRQCE). Thr-96 is a glycosylation site (O-linked (Fuc) threonine). Kringle domains are found at residues 126–208 (TCYE…TPAC) and 214–296 (ECYT…LPQC). The N-linked (GlcNAc...) asparagine glycan is linked to Asn-152. In terms of domain architecture, Peptidase S1 spans 311 to 561 (IKGGLYADIT…YLNWIRDNTR (251 aa)). Active-site charge relay system residues include His-357 and Asp-406. N-linked (GlcNAc...) asparagine glycosylation is present at Asn-483. Ser-513 acts as the Charge relay system in catalysis.

This sequence belongs to the peptidase S1 family. As to quaternary structure, heterodimer of chain A and chain B held by a disulfide bond. Binds to fibrin with high affinity. This interaction leads to an increase in the catalytic efficiency of the enzyme due to an increase in affinity for plasminogen. Similarly, binding to heparin increases the activation of plasminogen. Binds to annexin A2, cytokeratin-8, fibronectin and laminin. Binds to mannose receptor and the low-density lipoprotein receptor-related protein (LRP1); these proteins are involved in TPA clearance. Binds LRP1B; binding is followed by internalization and degradation. Forms heterodimer with SERPINA5. Interacts with SERPINE1. In complex with SERPINE1, interacts with SORL1. Post-translationally, the single chain, almost fully active enzyme, can be further processed into a two-chain fully active form by a cleavage after Arg-310 catalyzed by plasmin, tissue kallikrein or factor Xa.

Its subcellular location is the secreted. It is found in the extracellular space. The catalysed reaction is Specific cleavage of Arg-|-Val bond in plasminogen to form plasmin.. With respect to regulation, inhibited by SERPINA5. Inhibited by SERPINE1. Converts the abundant, but inactive, zymogen plasminogen to plasmin by hydrolyzing a single Arg-Val bond in plasminogen. By controlling plasmin-mediated proteolysis, it plays an important role in tissue remodeling and degradation, in cell migration and many other physiopathological events. During oocyte activation, plays a role in cortical granule reaction in the zona reaction, which contributes to the block to polyspermy. In Sus scrofa (Pig), this protein is Tissue-type plasminogen activator (PLAT).